The chain runs to 350 residues: 4-hydroxy-3-methylbut-2-en-1-yl diphosphate synthase (flavodoxin) (350 aa).

Residues Cys-263, Cys-266, Cys-298, and Glu-305 each coordinate [4Fe-4S] cluster.

It belongs to the IspG family. The cofactor is [4Fe-4S] cluster.

The enzyme catalyses (2E)-4-hydroxy-3-methylbut-2-enyl diphosphate + oxidized [flavodoxin] + H2O + 2 H(+) = 2-C-methyl-D-erythritol 2,4-cyclic diphosphate + reduced [flavodoxin]. Its pathway is isoprenoid biosynthesis; isopentenyl diphosphate biosynthesis via DXP pathway; isopentenyl diphosphate from 1-deoxy-D-xylulose 5-phosphate: step 5/6. Its function is as follows. Converts 2C-methyl-D-erythritol 2,4-cyclodiphosphate (ME-2,4cPP) into 1-hydroxy-2-methyl-2-(E)-butenyl 4-diphosphate. In Nautilia profundicola (strain ATCC BAA-1463 / DSM 18972 / AmH), this protein is 4-hydroxy-3-methylbut-2-en-1-yl diphosphate synthase (flavodoxin).